The sequence spans 776 residues: Photosystem I P700 chlorophyll a apoprotein A1 (776 aa).

Helical transmembrane passes span 76 to 99, 162 to 185, 201 to 225, 309 to 327, 368 to 391, 407 to 433, 455 to 477, and 557 to 575; these read IFSA…FHGA, LMAL…FHYH, LQHH…HVAN, VAHH…GHVY, WHAQ…HHMY, LGLF…IAVI, AIIS…LYIH, and LMIH…LILL. [4Fe-4S] cluster is bound by residues C599 and C608. 2 helical membrane passes run 615–636 and 690–712; these read HVFL…YFSW and LSGY…MFLF. H701 is a divinylchlorophyll a' binding site. Divinyl chlorophyll a contacts are provided by M709 and Y717. Position 718 (W718) interacts with phylloquinone. Residues 750–770 traverse the membrane as a helical segment; that stretch reads AVGVTHFLFGGIVTTWAFFHA.

Belongs to the PsaA/PsaB family. As to quaternary structure, the PsaA/B heterodimer binds the P700 divinyl chlorophyll special pair and subsequent electron acceptors. PSI consists of a core antenna complex that captures photons, and an electron transfer chain that converts photonic excitation into a charge separation. The cyanobacterial PSI reaction center is composed of one copy each of PsaA,B,C,D,E,F,I,J,K,L,M and X, and forms trimeric complexes. It depends on PSI electron transfer chain: 5 divinyl chlorophyll a, 1 divinyl chlorophyll a', 2 phylloquinones and 3 4Fe-4S clusters. PSI core antenna: 90 divinyl chlorophyll a, 22 carotenoids, 3 phospholipids and 1 galactolipid. P700 is a divinyl chlorophyll a/divinyl chlorophyll a' dimer, A0 is one or more divinyl chlorophyll a, A1 is one or both phylloquinones and FX is a shared 4Fe-4S iron-sulfur center. as a cofactor.

It localises to the cellular thylakoid membrane. It catalyses the reaction reduced [plastocyanin] + hnu + oxidized [2Fe-2S]-[ferredoxin] = oxidized [plastocyanin] + reduced [2Fe-2S]-[ferredoxin]. Its function is as follows. PsaA and PsaB bind P700, the primary electron donor of photosystem I (PSI), as well as the electron acceptors A0, A1 and FX. PSI is a plastocyanin/cytochrome c6-ferredoxin oxidoreductase, converting photonic excitation into a charge separation, which transfers an electron from the donor P700 chlorophyll pair to the spectroscopically characterized acceptors A0, A1, FX, FA and FB in turn. Oxidized P700 is reduced on the lumenal side of the thylakoid membrane by plastocyanin or cytochrome c6. This Prochlorococcus marinus (strain MIT 9303) protein is Photosystem I P700 chlorophyll a apoprotein A1.